Consider the following 203-residue polypeptide: Outer-membrane lipoprotein carrier protein (203 aa).

The first 20 residues, 1–20, serve as a signal peptide directing secretion; that stretch reads MKKWLAISCLIAGMTSTAVY.

Belongs to the LolA family. In terms of assembly, monomer.

The protein localises to the periplasm. Functionally, participates in the translocation of lipoproteins from the inner membrane to the outer membrane. Only forms a complex with a lipoprotein if the residue after the N-terminal Cys is not an aspartate (The Asp acts as a targeting signal to indicate that the lipoprotein should stay in the inner membrane). This Pectobacterium carotovorum subsp. carotovorum (strain PC1) protein is Outer-membrane lipoprotein carrier protein.